A 72-amino-acid polypeptide reads, in one-letter code: MEKPTSSTNGEKRKSPCDSNNKNDEMQETPNRDLVLEPSLKKMKTSEYSTVLVLCYRKTKKIHSNQLENDQS.

Residues 1–40 form a disordered region; it reads MEKPTSSTNGEKRKSPCDSNNKNDEMQETPNRDLVLEPSL. Residues 10–35 are compositionally biased toward basic and acidic residues; that stretch reads GEKRKSPCDSNNKNDEMQETPNRDLV.

It belongs to the SPAN-X family.

The polypeptide is Sperm protein associated with the nucleus on the X chromosome N1 (SPANXN1) (Gorilla gorilla gorilla (Western lowland gorilla)).